A 717-amino-acid polypeptide reads, in one-letter code: Glycine--tRNA ligase beta subunit (717 aa).

Belongs to the class-II aminoacyl-tRNA synthetase family. Tetramer of two alpha and two beta subunits.

It is found in the cytoplasm. The enzyme catalyses tRNA(Gly) + glycine + ATP = glycyl-tRNA(Gly) + AMP + diphosphate. This chain is Glycine--tRNA ligase beta subunit, found in Gloeothece citriformis (strain PCC 7424) (Cyanothece sp. (strain PCC 7424)).